The following is a 1799-amino-acid chain: MAAAPTQIEAELYYLIARFLQSGPCNKSAQVLVQELEEHQLIPRRLDWEGKEHRRSFEDLVAANAHIPPDYLLKICERIGPLLDKEIPQSVPGVQTLLGVGRQSLLRDAKDCKSTLWNGSAFAALHRGRPPELPVNYVKPPNVVNITSARQLTGCSRFSHVFPSSAYQHIKMHKRILGHLSSVYCVAFDRSGRRIFTGSDDCLVKIWATDDGRLLATLRGHSAEISDMAVNYENTLIAAGSCDKVVRVWCLRTCAPVAVLQGHSASITSIQFCPSTKGTTRYLTSTGADGTICFWQWHVKTMKFRDRPVKFTERSRPGVQISCSSFSSGGMFITTGSTDHVIRIYYLGSEIPEKIAELESHTDKVVAVQFCNNGDSLRFVSGSRDGTARIWQYQQQEWKSIVLDMATKMSGNNLTSAEDKVTKLKVTMVAWDRYDTTVITAVNNFLLKVWNSVTGQLLHTLSGHDDEVFVLEAHPFDQRIILSAGHDGNIFIWDLDRGTKIRNYFNMIEGQGHGAVFDCKFSPDGNHFACTDSHGHLLLFGFGCSKYYEKIPDQMFFHTDYRPLIRDANNYVLDEQTQQAPHLMPPPFLVDVDGNPHPTKFQRLVPGRENCKDEQLIPQLGYVANGDGEVVEQVIGQQTNDQEESILDGIIRELQREQDLRLINEGDVPHFPINRSYSVNGALSSPNMDIPSSPNIGLRRSGQIEGVRQMHNNAPRSQMATERDLMAWSRRVVVNELNSGVSRVQEECRNAKGDLEVSLYTVEKKKKPSYPIQRNDYQPSCGRSLRRTQRKRQHTYLTRSNIEHNSQASSQTSGVQEDSDSSSEEDETVGTSDASVEDPVVEWQSESSSSDSSSEYSDWIADAGINLQPPKRQTRQATQKIYSSSEDENLKLEDRQKKPKQTKKKKGGLVSMAGEPNEEWLAPQWILDTIPRRSPFVPQMGDELIYFRQGHEAYVRAVRKSKIYSVNLQKQPWNKMDLREQEFVKIVGIKYEIGPPTLCCLKLAFLDPISGKMTGESFSIKYHDMPDVIDFLVLHQFYNEAKERNWQIGDRFRSIIDDAWWFGTVESQQPFQPEYPDSSFQCYSVHWDNNEREKMSPWDMEPIPDGTAFPDEVGAGIPVSQEELTALLYKPQEGEWGAHSRDEECERVIQGINNLLSLDFASPFAVPVDLSAYPLYCTVVAYPTDLNTIKQRLENRFYRRISALMWEVRYIEHNARTFNEPDSPIVKAAKIVTDVLLRFIGDQSCSDILDTYNKIKAEDPDSSDLEEDSEMVDLDSDGPGTSSGRRAKCRGRRQSLKCNPDAWKKQCEELLSLIYEREDSEPFRQPADPQSYPVQQQQEGESSQSVPPDRQDPSLSEDYQDGIDTPMDFSTVKETLESGNYDSPLEFYKDVRQIFSNSKAYTSNKKSRIYSMTLRLSALFENHIKNIISDYKSAIQSQKRRRPRYRKRLRSSSSSLSSSRAPSPKGKQKQMKLQPKNDQNTSVAYARTSSPFSSPVSDAAEGVSLYLLDDEGDGPFSPSSFSGYSRSGNSHDPGKAKSFRNRVLPAKQDHSLDGPLTNVDGREPRTGAKRKLLSASEEDESMGGEEKEMKETKEQVHLSSSESGELGSSLSSESTSGSDSDSESTSRTDQDYVDGDHDYSKFIQTRPKRKLRKQHTNGKRNWKTRGTGGRGRWGRWGRWSRGGRGRGGRGRGGRGRGGGGGRGRGRGRGGRGASRGSSRAKRARVADDEFDTMFSGRFSRLPRIKTRNQGRRTVLYNDDSDNDNFVSTEDPLNLGTSRSGRVRKMTEKARVSHLMGWNY.

8 WD repeats span residues 170–209, 213–251, 255–297, 307–347, 353–393, 400–452, 456–495, and 502–542; these read IKMHKRILGHLSSVYCVAFDRSGRRIFTGSDDCLVKIWAT, RLLATLRGHSAEISDMAVNYENTLIAAGSCDKVVRVWCL, APVA…FWQW, RPVK…IYYL, EKIA…IWQY, SIVL…VWNS, QLLHTLSGHDDEVFVLEAHPFDQRIILSAGHDGNIFIWDL, and RNYF…LFGF. Ser693 bears the Phosphoserine mark. Positions 766–912 are disordered; it reads KKPSYPIQRN…KKKKGGLVSM (147 aa). A compositionally biased stretch (basic residues) spans 784–794; that stretch reads SLRRTQRKRQH. Positions 795–816 are enriched in polar residues; that stretch reads TYLTRSNIEHNSQASSQTSGVQ. The segment covering 817–828 has biased composition (acidic residues); the sequence is EDSDSSSEEDET. The span at 845–858 shows a compositional bias: low complexity; sequence SESSSSDSSSEYSD. The segment covering 875–884 has biased composition (polar residues); sequence RQATQKIYSS. Phosphoserine occurs at positions 884 and 885. Positions 897-907 are enriched in basic residues; it reads KKPKQTKKKKG. The 108-residue stretch at 1136-1243 folds into the Bromo 1 domain; it reads WGAHSRDEEC…DVLLRFIGDQ (108 aa). 4 disordered regions span residues 1258–1291, 1321–1366, 1435–1482, and 1517–1723; these read EDPDSSDLEEDSEMVDLDSDGPGTSSGRRAKCRG, EPFR…IDTP, IQSQ…QNTS, and SPSS…AKRA. Residues 1260–1276 are compositionally biased toward acidic residues; that stretch reads PDSSDLEEDSEMVDLDS. A Bromo 2 domain is found at 1298–1427; sequence CNPDAWKKQC…ALFENHIKNI (130 aa). Over residues 1333–1348 the composition is skewed to low complexity; the sequence is PVQQQQEGESSQSVPP. A compositionally biased stretch (basic residues) spans 1438-1450; that stretch reads QKRRRPRYRKRLR. Composition is skewed to low complexity over residues 1451-1463 and 1517-1530; these read SSSSSLSSSRAPS and SPSSFSGYSRSGNS. Phosphoserine is present on residues Ser1574 and Ser1576. Residues 1584–1596 show a composition bias toward basic and acidic residues; the sequence is GEEKEMKETKEQV. Over residues 1598–1623 the composition is skewed to low complexity; sequence LSSSESGELGSSLSSESTSGSDSDSE. Basic and acidic residues predominate over residues 1624–1640; the sequence is STSRTDQDYVDGDHDYS. Composition is skewed to basic residues over residues 1646 to 1663 and 1681 to 1694; these read RPKRKLRKQHTNGKRNWK and RGGRGRGGRGRGGR. Position 1760 is a phosphoserine (Ser1760).

Functionally, plays a role in the regulation of cell morphology and cytoskeletal organization. Required in the control of cell shape. The chain is Bromodomain and WD repeat-containing protein 3 (Brwd3) from Mus musculus (Mouse).